The sequence spans 412 residues: UPF0754 membrane protein MAE_37850 (412 aa).

The next 2 membrane-spanning stretches (helical) occupy residues 3–23 and 387–407; these read LPTL…GYFT and IVNL…IILI.

Belongs to the UPF0754 family.

It is found in the cell inner membrane. The polypeptide is UPF0754 membrane protein MAE_37850 (Microcystis aeruginosa (strain NIES-843 / IAM M-2473)).